The following is a 671-amino-acid chain: MLWEKVMFIANNKYKLVTKYKPSGDQNQAIEKLNKAIIENKKHQVLLGATGTGKTFTIANIIAKHNKQALVIAHNKTLAMQLYYELKEMFPENRVEYFVSNFDFFQPEAYIPSKDLYIDKDSRQNMELDMMRLSACNALLTRNDTIVVASVAALFALQNPLEYSSAFIELKVGQKIKRNELLTWLVRSGYTRNDIENQLGSFSAKGDVVKIVPGWVNNIMFRISLFDDEIESIHTLNTITNSILDNITTVTIHPAQSYITPQDKLKTICNNIRNELVQRLAELQSENKLLEAQRLEQRTKYDLESLEEFGFCSGIENYSSHLDFRSKGQRPYVLLDYFNNDFITIVDESHITLPQIRGMYNTDRSRKLTLVEYGFRLPSALDNRPLNFDEFNSLIKQVIYTSATPGDYELDLVNHQVVQQIIRPTGLLDPQIEIRKTTNQIDDIINEIHLRKLQNERVFITTLTIRMSEDLTAFLQEKNIKVAYLHSELKTLERSEILNDLRKGVYDVVVGVNLLREGLDLPEVSLVCILDADKQGFLRNYRSLIQTIGRVARNVNGKAIMYADTVSQAMDEAIKETNRRRKIQEEFNKKHNIVPKTISKAISESILSEQTKKTLAKAKKIKDKKQKLQTIQQTIDNLRQEMLQAAKELDFERAAILRDTIIELENEKNTN.

In terms of domain architecture, Helicase ATP-binding spans 35-423 (KAIIENKKHQ…NHQVVQQIIR (389 aa)). 48–55 (GATGTGKT) serves as a coordination point for ATP. Residues 101–124 (NFDFFQPEAYIPSKDLYIDKDSRQ) carry the Beta-hairpin motif. The region spanning 440–602 (QIDDIINEIH…IVPKTISKAI (163 aa)) is the Helicase C-terminal domain. A UVR domain is found at 632–667 (QQTIDNLRQEMLQAAKELDFERAAILRDTIIELENE).

This sequence belongs to the UvrB family. In terms of assembly, forms a heterotetramer with UvrA during the search for lesions. Interacts with UvrC in an incision complex.

It localises to the cytoplasm. Functionally, the UvrABC repair system catalyzes the recognition and processing of DNA lesions. A damage recognition complex composed of 2 UvrA and 2 UvrB subunits scans DNA for abnormalities. Upon binding of the UvrA(2)B(2) complex to a putative damaged site, the DNA wraps around one UvrB monomer. DNA wrap is dependent on ATP binding by UvrB and probably causes local melting of the DNA helix, facilitating insertion of UvrB beta-hairpin between the DNA strands. Then UvrB probes one DNA strand for the presence of a lesion. If a lesion is found the UvrA subunits dissociate and the UvrB-DNA preincision complex is formed. This complex is subsequently bound by UvrC and the second UvrB is released. If no lesion is found, the DNA wraps around the other UvrB subunit that will check the other stand for damage. The polypeptide is UvrABC system protein B (Mycoplasma mycoides subsp. mycoides SC (strain CCUG 32753 / NCTC 10114 / PG1)).